A 331-amino-acid polypeptide reads, in one-letter code: 3-dehydroquinate synthase homolog (331 aa).

This sequence belongs to the archaeal-type DHQ synthase family.

This chain is 3-dehydroquinate synthase homolog, found in Aquifex aeolicus (strain VF5).